A 362-amino-acid chain; its full sequence is Transcriptional repressor PifC (362 aa).

Transcription repression of its own gene by binding to the PIF operator (pifO) and replication initiation from the primary origin (ori-1). Transcriptional repressor of the pifA and pifB. The chain is Transcriptional repressor PifC (pifC) from Escherichia coli (strain K12).